We begin with the raw amino-acid sequence, 452 residues long: tRNA modification GTPase MnmE (452 aa).

3 residues coordinate (6S)-5-formyl-5,6,7,8-tetrahydrofolate: Arg21, Glu78, and Lys118. The region spanning 214 to 375 is the TrmE-type G domain; the sequence is GMKVVIAGRP…LRDHLKQAMG (162 aa). Position 224 (Asn224) interacts with K(+). GTP is bound by residues 224–229, 243–249, and 268–271; these read NAGKSS, TDIAGTT, and DTAG. Ser228 is a binding site for Mg(2+). Thr243, Ile245, and Thr248 together coordinate K(+). Thr249 serves as a coordination point for Mg(2+). Lys452 contributes to the (6S)-5-formyl-5,6,7,8-tetrahydrofolate binding site.

This sequence belongs to the TRAFAC class TrmE-Era-EngA-EngB-Septin-like GTPase superfamily. TrmE GTPase family. In terms of assembly, homodimer. Heterotetramer of two MnmE and two MnmG subunits. Requires K(+) as cofactor.

It localises to the cytoplasm. Functionally, exhibits a very high intrinsic GTPase hydrolysis rate. Involved in the addition of a carboxymethylaminomethyl (cmnm) group at the wobble position (U34) of certain tRNAs, forming tRNA-cmnm(5)s(2)U34. The protein is tRNA modification GTPase MnmE of Haemophilus influenzae (strain 86-028NP).